The primary structure comprises 341 residues: Methionine import ATP-binding protein MetN 2 (341 aa).

The ABC transporter domain occupies 2–241; the sequence is IEASELTKVY…PKAPLTQEFI (240 aa). 38–45 is an ATP binding site; it reads GYSGAGKS.

Belongs to the ABC transporter superfamily. Methionine importer (TC 3.A.1.24) family. In terms of assembly, the complex is composed of two ATP-binding proteins (MetN), two transmembrane proteins (MetI) and a solute-binding protein (MetQ).

It is found in the cell membrane. It catalyses the reaction L-methionine(out) + ATP + H2O = L-methionine(in) + ADP + phosphate + H(+). It carries out the reaction D-methionine(out) + ATP + H2O = D-methionine(in) + ADP + phosphate + H(+). In terms of biological role, part of the ABC transporter complex MetNIQ involved in methionine import. Responsible for energy coupling to the transport system. This chain is Methionine import ATP-binding protein MetN 2, found in Shouchella clausii (strain KSM-K16) (Alkalihalobacillus clausii).